The chain runs to 734 residues: Paralemmin-3 (734 aa).

A coiled-coil region spans residues 19 to 64 (SALYRQRLEVIAEKRRLQEEIGAARRELEEEKLRVERLKRKSLRER). Disordered regions lie at residues 62 to 100 (RERWLMDGAAEGPERPEEPASKDPQSPEGQAQARIRNLE) and 114 to 217 (QSAS…LGVS). A compositionally biased stretch (basic and acidic residues) spans 73-82 (GPERPEEPAS). Positions 90 to 116 (GQAQARIRNLEDSLFSLQSQLQLLQSA) form a coiled coil. Phosphoserine is present on residues Ser139, Ser158, Ser167, Ser170, and Ser172. Residues 186–198 (RPSTEAIGTSSEA) are compositionally biased toward polar residues. The residue at position 270 (Ser270) is a Phosphoserine. The span at 297 to 308 (DVTGESGRDAEA) shows a compositional bias: basic and acidic residues. Disordered regions lie at residues 297-347 (DVTG…PGVE), 374-400 (PQGAGSAGEPEALIGAQPRGGEASWEV), and 413-709 (EKGR…YAPA). Thr311 carries the post-translational modification Phosphothreonine. Residues 315-336 (RLQEQFEAETCRKEEGASRDSL) are compositionally biased toward basic and acidic residues. A phosphoserine mark is found at Ser332 and Ser335. Composition is skewed to basic and acidic residues over residues 413–427 (EKGRAEKLGAEREDG), 435–452 (TQGREENEAEKVERKDSE), 462–484 (DEEKWEVKTTEGEESLEVEKGGE), 494–531 (LVTEKKPEGSLETERKGSEMPLDQEKDGEGSLDRESKT), 540–561 (IGDKSSLDETKGSKKLLDEKTG), 571–582 (EGSKKLLDREAD), 589–607 (EVDKTSGAKDDVSPEEQGK), and 630–647 (DEPRSEEQGQQEPEKQEG). Ser451 bears the Phosphoserine mark. The residue at position 601 (Ser601) is a Phosphoserine. Ser721 carries the post-translational modification Phosphoserine. 2 S-palmitoyl cysteine lipidation sites follow: Cys728 and Cys730. At Cys731 the chain carries Cysteine methyl ester. A lipid anchor (S-farnesyl cysteine) is attached at Cys731. Positions 732 to 734 (VVM) are cleaved as a propeptide — removed in mature form.

The protein belongs to the paralemmin family. Interacts with SIGIRR. Post-translationally, palmitoylated on Cys-728 and Cys-730 and prenylated on Cys-731; which is required for membrane association.

Its subcellular location is the cytoplasm. The protein localises to the cell membrane. In terms of biological role, ATP-binding protein, which may act as a adapter in the Toll-like receptor (TLR) signaling. The protein is Paralemmin-3 (Palm3) of Mus musculus (Mouse).